The chain runs to 475 residues: Ribulose bisphosphate carboxylase large chain (475 aa).

The propeptide occupies 1–2 (MS). N-acetylproline is present on P3. The residue at position 14 (K14) is an N6,N6,N6-trimethyllysine. Residues N123 and T173 each coordinate substrate. K175 serves as the catalytic Proton acceptor. K177 serves as a coordination point for substrate. The Mg(2+) site is built by K201, D203, and E204. K201 is modified (N6-carboxylysine). The active-site Proton acceptor is H294. R295, H327, and S379 together coordinate substrate.

Belongs to the RuBisCO large chain family. Type I subfamily. Heterohexadecamer of 8 large chains and 8 small chains; disulfide-linked. The disulfide link is formed within the large subunit homodimers. It depends on Mg(2+) as a cofactor. In terms of processing, the disulfide bond which can form in the large chain dimeric partners within the hexadecamer appears to be associated with oxidative stress and protein turnover.

It localises to the plastid. It is found in the chloroplast. It catalyses the reaction 2 (2R)-3-phosphoglycerate + 2 H(+) = D-ribulose 1,5-bisphosphate + CO2 + H2O. The catalysed reaction is D-ribulose 1,5-bisphosphate + O2 = 2-phosphoglycolate + (2R)-3-phosphoglycerate + 2 H(+). In terms of biological role, ruBisCO catalyzes two reactions: the carboxylation of D-ribulose 1,5-bisphosphate, the primary event in carbon dioxide fixation, as well as the oxidative fragmentation of the pentose substrate in the photorespiration process. Both reactions occur simultaneously and in competition at the same active site. The chain is Ribulose bisphosphate carboxylase large chain from Corylus cornuta (Beaked hazel).